Consider the following 142-residue polypeptide: Large ribosomal subunit protein uL13 (142 aa).

It belongs to the universal ribosomal protein uL13 family. Part of the 50S ribosomal subunit.

Its function is as follows. This protein is one of the early assembly proteins of the 50S ribosomal subunit, although it is not seen to bind rRNA by itself. It is important during the early stages of 50S assembly. This is Large ribosomal subunit protein uL13 from Cupriavidus necator (strain ATCC 17699 / DSM 428 / KCTC 22496 / NCIMB 10442 / H16 / Stanier 337) (Ralstonia eutropha).